The sequence spans 50 residues: Ribosome-inactivating protein lyophyllin (50 aa).

The catalysed reaction is Endohydrolysis of the N-glycosidic bond at one specific adenosine on the 28S rRNA.. N-glycosylase that inhibits protein synthesis by depurinating ribosomal rRNA, and thus acts as a ribosomal inactivating protein (RIP). Has adenine polynucleotide glycosidase activity on the poly(A) substrate A30-ssDNA. Inhibits cell-free translation in rabbit reticulocyte lysate system with an IC(50) of 1 nM. May function in the defense response to pathogens. Displays antifungal activity against C.comatus and P.piricola, but not against R.solani, M.arachidicola and C.gossypii. Inhibits mycelial growth in P.piricola with an IC(50) of 2.5 uM. Has cytotoxic activity against the human cancer cell lines Hela, HepG2, and JAR, with IC(50) of 358.8, 489.8, and 926.9 nM respectively. It also inhibits HIV-1 reverse transcriptase activity (IC(50)=7.9 nM) and disrupts mouse embryonic development. This Lyophyllum shimeji (Hon-shimeji) protein is Ribosome-inactivating protein lyophyllin.